The primary structure comprises 186 residues: Large ribosomal subunit protein uL6 (186 aa).

Belongs to the universal ribosomal protein uL6 family. Part of the 50S ribosomal subunit.

Its function is as follows. This protein binds to the 23S rRNA, and is important in its secondary structure. It is located near the subunit interface in the base of the L7/L12 stalk, and near the tRNA binding site of the peptidyltransferase center. The chain is Large ribosomal subunit protein uL6 from Hyperthermus butylicus (strain DSM 5456 / JCM 9403 / PLM1-5).